A 1151-amino-acid polypeptide reads, in one-letter code: Elicitor of plant defense protein 1 (1151 aa).

Disordered stretches follow at residues 22–130 (YQDP…TLGE), 178–197 (ERIRAEESDSGRLSPLRSIK), and 236–255 (NYNSVIPPPEPLNTDPDMHP). Residues 39-49 (IIEDGEPEDEW) show a composition bias toward acidic residues. Residues 64 to 99 (QNSASRLSKMSLTERFSIQTLDDTDGNTKSNRSSAT) show a composition bias toward polar residues. Residues 104-122 (NPPDFSNGNDDSNGNSQNP) are compositionally biased toward low complexity. A compositionally biased stretch (basic and acidic residues) spans 178–187 (ERIRAEESDS). Residues 242 to 500 (PPPEPLNTDP…NLCTEAFNPL (259 aa)) enclose the uDENN domain. One can recognise a cDENN domain in the interval 524-656 (EIPGSRTIDI…ARRKLMSLLQ (133 aa)). Positions 658-1019 (AAPHKLRYGV…DREMQPANDA (362 aa)) constitute a dDENN domain. 2 stretches are compositionally biased toward polar residues: residues 695 to 711 (STPKSTLGKWVSQSSSG) and 744 to 760 (TSKSGKTSPQSSVSPVS). Residues 695 to 809 (STPKSTLGKW…SSSFGVDKHP (115 aa)) are disordered. Residues 784–798 (LREKRSGHFGEEKMR) are compositionally biased toward basic and acidic residues. The segment at 886-934 (GHCFNYMPKDNTSMCTICNDLAEGDGVYRCTGCKIVSHGRCLGYCSLIC) adopts a Phorbol-ester/DAG-type zinc-finger fold.

Belongs to the EPD1 elicitor family.

It is found in the secreted. Its subcellular location is the host cell. Acts as an elicitor that triggers cell death and defense responses in the host plants. The sequence is that of Elicitor of plant defense protein 1 from Gibberella zeae (strain ATCC MYA-4620 / CBS 123657 / FGSC 9075 / NRRL 31084 / PH-1) (Wheat head blight fungus).